A 196-amino-acid polypeptide reads, in one-letter code: Endoribonuclease YbeY (196 aa).

Zn(2+) contacts are provided by histidine 120, histidine 124, and histidine 130.

It belongs to the endoribonuclease YbeY family. Zn(2+) serves as cofactor.

It is found in the cytoplasm. In terms of biological role, single strand-specific metallo-endoribonuclease involved in late-stage 70S ribosome quality control and in maturation of the 3' terminus of the 16S rRNA. The sequence is that of Endoribonuclease YbeY from Corynebacterium glutamicum (strain ATCC 13032 / DSM 20300 / JCM 1318 / BCRC 11384 / CCUG 27702 / LMG 3730 / NBRC 12168 / NCIMB 10025 / NRRL B-2784 / 534).